A 264-amino-acid polypeptide reads, in one-letter code: Triosephosphate isomerase (264 aa).

13–15 contacts substrate; it reads NWK. The active-site Electrophile is the His106. Residue Glu179 is the Proton acceptor of the active site. Residues Gly185, Ser223, and 244–245 each bind substrate; that span reads GG.

Belongs to the triosephosphate isomerase family. In terms of assembly, homodimer.

The protein localises to the cytoplasm. It carries out the reaction D-glyceraldehyde 3-phosphate = dihydroxyacetone phosphate. Its pathway is carbohydrate biosynthesis; gluconeogenesis. It functions in the pathway carbohydrate degradation; glycolysis; D-glyceraldehyde 3-phosphate from glycerone phosphate: step 1/1. Its function is as follows. Involved in the gluconeogenesis. Catalyzes stereospecifically the conversion of dihydroxyacetone phosphate (DHAP) to D-glyceraldehyde-3-phosphate (G3P). In Acinetobacter baumannii (strain SDF), this protein is Triosephosphate isomerase.